Here is a 423-residue protein sequence, read N- to C-terminus: UPF0597 protein CTC_02309 (423 aa).

The protein belongs to the UPF0597 family.

The polypeptide is UPF0597 protein CTC_02309 (Clostridium tetani (strain Massachusetts / E88)).